A 526-amino-acid chain; its full sequence is Phosphoenolpyruvate carboxylase (526 aa).

Belongs to the PEPCase type 2 family. Homotetramer. Mg(2+) is required as a cofactor.

It catalyses the reaction oxaloacetate + phosphate = phosphoenolpyruvate + hydrogencarbonate. Catalyzes the irreversible beta-carboxylation of phosphoenolpyruvate (PEP) to form oxaloacetate (OAA), a four-carbon dicarboxylic acid source for the tricarboxylic acid cycle. The polypeptide is Phosphoenolpyruvate carboxylase (Methanosarcina barkeri (strain Fusaro / DSM 804)).